The chain runs to 232 residues: Small ribosomal subunit protein uS3 (232 aa).

A KH type-2 domain is found at 39-107 (IRAILHKELK…DVVINIVEIR (69 aa)).

The protein belongs to the universal ribosomal protein uS3 family. As to quaternary structure, part of the 30S ribosomal subunit. Forms a tight complex with proteins S10 and S14.

Its function is as follows. Binds the lower part of the 30S subunit head. Binds mRNA in the 70S ribosome, positioning it for translation. This Rhodopseudomonas palustris (strain BisA53) protein is Small ribosomal subunit protein uS3.